Reading from the N-terminus, the 341-residue chain is Eukaryotic translation initiation factor 2 subunit 1 (341 aa).

The S1 motif domain maps to 18 to 89 (NELVMVRIES…DKGYIDLSKR (72 aa)). A disordered region spans residues 301–341 (LMEQLEVENQDGDGEEHEDDDDDDDDEEEEEKPKEKKSSRK). Positions 303–330 (EQLEVENQDGDGEEHEDDDDDDDDEEEE) are enriched in acidic residues. Residues 331-341 (EKPKEKKSSRK) are compositionally biased toward basic and acidic residues.

It belongs to the eIF-2-alpha family. As to quaternary structure, eukaryotic translation initiation factor 2 eIF2 is a heterotrimeric complex composed of an alpha, a beta and a gamma subunit.

It localises to the cytoplasm. The protein localises to the cytosol. Its function is as follows. eIF-2 functions in the early steps of protein synthesis by forming a ternary complex with GTP and initiator tRNA. This complex binds to a 40S ribosomal subunit, followed by mRNA binding to form a 43S pre-initiation complex. Junction of the 60S ribosomal subunit to form the 80S initiation complex is preceded by hydrolysis of the GTP bound to eIF-2 and release of an eIF-2-GDP binary complex. In order for eIF-2 to recycle and catalyze another round of initiation, the GDP bound to eIF-2 must exchange with GTP by way of a reaction catalyzed by eIF2B. The protein is Eukaryotic translation initiation factor 2 subunit 1 (eif2s1) of Dictyostelium discoideum (Social amoeba).